The following is a 184-amino-acid chain: ATP synthase subunit b, chloroplastic (184 aa).

The helical transmembrane segment at leucine 27–leucine 49 threads the bilayer.

This sequence belongs to the ATPase B chain family. In terms of assembly, F-type ATPases have 2 components, F(1) - the catalytic core - and F(0) - the membrane proton channel. F(1) has five subunits: alpha(3), beta(3), gamma(1), delta(1), epsilon(1). F(0) has four main subunits: a(1), b(1), b'(1) and c(10-14). The alpha and beta chains form an alternating ring which encloses part of the gamma chain. F(1) is attached to F(0) by a central stalk formed by the gamma and epsilon chains, while a peripheral stalk is formed by the delta, b and b' chains.

The protein localises to the plastid. The protein resides in the chloroplast thylakoid membrane. In terms of biological role, f(1)F(0) ATP synthase produces ATP from ADP in the presence of a proton or sodium gradient. F-type ATPases consist of two structural domains, F(1) containing the extramembraneous catalytic core and F(0) containing the membrane proton channel, linked together by a central stalk and a peripheral stalk. During catalysis, ATP synthesis in the catalytic domain of F(1) is coupled via a rotary mechanism of the central stalk subunits to proton translocation. Functionally, component of the F(0) channel, it forms part of the peripheral stalk, linking F(1) to F(0). This is ATP synthase subunit b, chloroplastic from Olimarabidopsis pumila (Dwarf rocket).